A 221-amino-acid polypeptide reads, in one-letter code: MLEDLRLYQLISPSLPVGSFTYSQGLEWAIEKGWVTNVTELKHWLSNQLMDSLATLELPVLAKLTQLLQQEEWQQAQEWCDFIIANRETKELRLEERQRGLAFSMLLPKLGIELNQTTLPMVKQTQVAAFALAANHWNLTPTKLAAAYAWGWLENAVIVGIKLVPLGQSAGQQLLLEMADVIPQAVEKSQHWPEHLIGSFTPAQVLASSRHESQYTRLFRS.

It belongs to the UreF family. In terms of assembly, ureD, UreF and UreG form a complex that acts as a GTP-hydrolysis-dependent molecular chaperone, activating the urease apoprotein by helping to assemble the nickel containing metallocenter of UreC. The UreE protein probably delivers the nickel.

It localises to the cytoplasm. In terms of biological role, required for maturation of urease via the functional incorporation of the urease nickel metallocenter. The polypeptide is Urease accessory protein UreF (Aliivibrio fischeri (strain MJ11) (Vibrio fischeri)).